A 253-amino-acid polypeptide reads, in one-letter code: DNA repair protein RecO (253 aa).

This sequence belongs to the RecO family.

Functionally, involved in DNA repair and RecF pathway recombination. The protein is DNA repair protein RecO of Staphylococcus epidermidis (strain ATCC 35984 / DSM 28319 / BCRC 17069 / CCUG 31568 / BM 3577 / RP62A).